The following is a 378-amino-acid chain: N-acetyllactosaminide beta-1,3-N-acetylglucosaminyltransferase 4 (378 aa).

Residues 1-28 (MLPPQPSAAHQGRGGRSGLLPKGPAMLC) are Cytoplasmic-facing. The chain crosses the membrane as a helical; Signal-anchor for type II membrane protein span at residues 29 to 49 (RLCWLVSYSLAVLLLGCLLFL). The Lumenal segment spans residues 50-378 (RKAAKPAGDP…KCAAGPIPQR (329 aa)). Residues 59-81 (PTAHQPFWAPPTPRHSRCPPNHT) form a disordered region. N-linked (GlcNAc...) asparagine glycosylation is present at Asn192.

The protein belongs to the glycosyltransferase 31 family. As to expression, mainly expressed in brain tissues such as whole brain, hippocampus, amygdala, cerebellum and caudate nucleus. Also expressed in colon, esophagus and kidney.

Its subcellular location is the golgi apparatus membrane. The enzyme catalyses a beta-D-galactosyl-(1-&gt;4)-N-acetyl-beta-D-glucosaminyl derivative + UDP-N-acetyl-alpha-D-glucosamine = an N-acetyl-beta-D-glucosaminyl-(1-&gt;3)-beta-D-galactosyl-(1-&gt;4)-N-acetyl-beta-D-glucosaminyl derivative + UDP + H(+). It functions in the pathway protein modification; protein glycosylation. In terms of biological role, beta-1,3-N-acetylglucosaminyltransferase involved in the synthesis of poly-N-acetyllactosamine. Has activity for type 2 oligosaccharides. This is N-acetyllactosaminide beta-1,3-N-acetylglucosaminyltransferase 4 (B3GNT4) from Homo sapiens (Human).